Consider the following 1689-residue polypeptide: Cullin-7 (1689 aa).

In terms of domain architecture, CPH spans 349 to 422 (RASFASFNTY…HWHMLEILGF (74 aa)). Positions 793–972 (PIQIPFFDVF…HTRLFYMVRA (180 aa)) constitute a DOC domain. The span at 1321 to 1337 (VAHEDSGREDKSKKEEA) shows a compositional bias: basic and acidic residues. Positions 1321-1371 (VAHEDSGREDKSKKEEAIGEAAAVAMAEEEDQGKKEEGEEEGEGEDEEEER) are disordered. Acidic residues predominate over residues 1358-1370 (GEEEGEGEDEEEE). Residue lysine 1567 forms a Glycyl lysine isopeptide (Lys-Gly) (interchain with G-Cter in NEDD8) linkage.

The protein belongs to the cullin family. Component of the 3M complex, composed of core components CUL7, CCDC8 and OBSL1. Component of the Cul7-RING(FBXW8) complex consisting of CUL7, RBX1, SKP1 and FBXW8. Within the Cul7-RING(FBXW8) complex interacts with FBXW8 and RBX1, but not with SKP1. Interacts with CUL1 (via the C-terminal domain); the interaction seems to be mediated by FBXW8; it is likely specific to FBXW8, but not other F-box proteins. Interacts (via the CPH domain) with p53/TP53; the interaction preferentially involves tetrameric and dimeric p53/TP53; this interaction recruits p53/TP53 for ubiquitination by neddylated CUL1-RBX1. The CUL7-CUL9 heterodimer seems to interact specifically with p53/TP53. Interacts with FBXW8; interaction is mutually exclusive of binding to CUL9 or p53/TP53. Interacts with CUL9; leading to inhibited CUL9 activity. Interacts with OBSL1. Interacts (as part of the 3M complex) with HDAC4 and HDAC5; it is negatively regulated by ANKRA2.

It localises to the cytoplasm. The protein resides in the cytoskeleton. The protein localises to the microtubule organizing center. It is found in the centrosome. Its subcellular location is the perinuclear region. It localises to the golgi apparatus. Its pathway is protein modification; protein ubiquitination. Core component of the 3M and Cul7-RING(FBXW8) complexes, which mediate the ubiquitination and subsequent proteasomal degradation of target proteins. Core component of the 3M complex, a complex required to regulate microtubule dynamics and genome integrity. It is unclear how the 3M complex regulates microtubules, it could act by controlling the level of a microtubule stabilizer. The Cul7-RING(FBXW8) complex alone lacks ubiquitination activity and does not promote polyubiquitination and proteasomal degradation of p53/TP53. However it mediates recruitment of p53/TP53 for ubiquitination by neddylated CUL1-RBX1. Interaction with CUL9 is required to inhibit CUL9 activity and ubiquitination of BIRC5. The Cul7-RING(FBXW8) complex also mediates ubiquitination and consequent degradation of target proteins such as GORASP1, IRS1 and MAP4K1/HPK1. Ubiquitination of GORASP1 regulates Golgi morphogenesis and dendrite patterning in brain. Mediates ubiquitination and degradation of IRS1 in a mTOR-dependent manner: the Cul7-RING(FBXW8) complex recognizes and binds IRS1 previously phosphorylated by S6 kinase (RPS6KB1 or RPS6KB2). The Cul7-RING(FBXW8) complex also mediates ubiquitination of MAP4K1/HPK1: recognizes and binds autophosphorylated MAP4K1/HPK1, leading to its degradation, thereby affecting cell proliferation and differentiation. Acts as a regulator in trophoblast cell epithelial-mesenchymal transition and placental development. While the Cul7-RING(FBXW8) and the 3M complexes are associated and involved in common processes, CUL7 and the Cul7-RING(FBXW8) complex may have additional functions. Probably plays a role in the degradation of proteins involved in endothelial proliferation and/or differentiation. The polypeptide is Cullin-7 (Cul7) (Mus musculus (Mouse)).